Here is a 348-residue protein sequence, read N- to C-terminus: MNGTEGPNFYVPFSNATGVVRSPFEYPQYYLAEPWQFSMLAAYMFLLIVLGFPINFLTLYVTVQHKKLRTPLNYILLNLAVADLFMVLGGFTSTLYTSLHGYFVFGPTGCNLEGFFATLGGEIALWSLVVLAIERYVVVCKPMSNFRFGENHAIMGVAFTWVMALACAAPPLAGWSRYIPEGLQCSCGIDYYTLKPEVNNESFVIYMFVVHFTIPMIIIFFCYGQLVFTVKEAAAQQQESATTQKAEKEVTRMVIIMVIAFLICWVPYASVAFYIFTHQGSNFGPIFMTIPAFFAKSAAIYNPVIYIMMNKQFRNCMLTTICCGKNPLGDDEASATVSKTETSQVAPA.

M1 carries the N-acetylmethionine modification. Residues 1–36 are Extracellular-facing; the sequence is MNGTEGPNFYVPFSNATGVVRSPFEYPQYYLAEPWQ. N2 and N15 each carry an N-linked (GlcNAc...) asparagine glycan. A helical transmembrane segment spans residues 37-61; that stretch reads FSMLAAYMFLLIVLGFPINFLTLYV. Topologically, residues 62–73 are cytoplasmic; the sequence is TVQHKKLRTPLN. A helical transmembrane segment spans residues 74-96; the sequence is YILLNLAVADLFMVLGGFTSTLY. At 97–110 the chain is on the extracellular side; the sequence is TSLHGYFVFGPTGC. C110 and C187 are disulfide-bonded. The chain crosses the membrane as a helical span at residues 111-133; the sequence is NLEGFFATLGGEIALWSLVVLAI. The short motif at 134 to 136 is the 'Ionic lock' involved in activated form stabilization element; that stretch reads ERY. At 134–152 the chain is on the cytoplasmic side; that stretch reads ERYVVVCKPMSNFRFGENH. A helical transmembrane segment spans residues 153-173; the sequence is AIMGVAFTWVMALACAAPPLA. Residues 174–202 are Extracellular-facing; sequence GWSRYIPEGLQCSCGIDYYTLKPEVNNES. E201 serves as a coordination point for Zn(2+). The helical transmembrane segment at 203–224 threads the bilayer; the sequence is FVIYMFVVHFTIPMIIIFFCYG. At 225-252 the chain is on the cytoplasmic side; the sequence is QLVFTVKEAAAQQQESATTQKAEKEVTR. Residues 253-274 form a helical membrane-spanning segment; sequence MVIIMVIAFLICWVPYASVAFY. The Extracellular portion of the chain corresponds to 275 to 284; sequence IFTHQGSNFG. A Zn(2+)-binding site is contributed by Q279. A helical transmembrane segment spans residues 285–309; that stretch reads PIFMTIPAFFAKSAAIYNPVIYIMM. Residue K296 is modified to N6-(retinylidene)lysine. Residues 310–348 are Cytoplasmic-facing; sequence NKQFRNCMLTTICCGKNPLGDDEASATVSKTETSQVAPA. 2 S-palmitoyl cysteine lipidation sites follow: C322 and C323. The segment at 330–348 is interaction with SAG; the sequence is DDEASATVSKTETSQVAPA. S334 is subject to Phosphoserine. Phosphothreonine is present on T336. S338 carries the post-translational modification Phosphoserine. 2 positions are modified to phosphothreonine: T340 and T342. Phosphoserine is present on S343.

It belongs to the G-protein coupled receptor 1 family. Opsin subfamily. In terms of assembly, homodimer. May form a complex composed of RHO, GRK1 and RCVRN in a Ca(2+)-dependent manner; RCVRN prevents the interaction between GRK1 and RHO. Interacts with GRK1. Interacts (phosphorylated form) with SAG. Interacts with GNAT1. Interacts with GNAT3. SAG and G-proteins compete for a common binding site. Interacts with PRCD; the interaction promotes PRCD stability. Forms a complex with ASAP1 and ARF4. Forms a complex with ASAP1, RAB11A, Rabin8/RAB3IP, ARF4 and RAB11FIP3; the complex regulates Golgi-to-cilia rhodopsin/RHO transport in photoreceptors. Phosphorylated on some or all of the serine and threonine residues present in the C-terminal region. After activation by light, phosphorylated by GRK1 (in vitro). In terms of processing, contains one covalently linked retinal chromophore. Upon light absorption, the covalently bound 11-cis-retinal is converted to all-trans-retinal. After hydrolysis of the Schiff base and release of the covalently bound all-trans-retinal, active rhodopsin is regenerated by binding of a fresh molecule of 11-cis-retinal. As to expression, rod shaped photoreceptor cells which mediate vision in dim light.

It is found in the membrane. Its subcellular location is the cell projection. The protein localises to the cilium. It localises to the photoreceptor outer segment. Its function is as follows. Photoreceptor required for image-forming vision at low light intensity. Required for photoreceptor cell viability after birth. Light-induced isomerization of the chromophore 11-cis-retinal to all-trans-retinal triggers a conformational change that activates signaling via G-proteins. Subsequent receptor phosphorylation mediates displacement of the bound G-protein alpha subunit by the arrestin SAG and terminates signaling. The protein is Rhodopsin (RHO) of Homo sapiens (Human).